Reading from the N-terminus, the 476-residue chain is Eukaryotic translation initiation factor 3 subunit L (476 aa).

The PCI domain occupies 257–452 (DAIRMFSHIL…DLDYALENDL (196 aa)).

The protein belongs to the eIF-3 subunit L family. Component of the eukaryotic translation initiation factor 3 (eIF-3) complex.

It is found in the cytoplasm. In terms of biological role, component of the eukaryotic translation initiation factor 3 (eIF-3) complex, which is involved in protein synthesis of a specialized repertoire of mRNAs and, together with other initiation factors, stimulates binding of mRNA and methionyl-tRNAi to the 40S ribosome. The eIF-3 complex specifically targets and initiates translation of a subset of mRNAs involved in cell proliferation. The chain is Eukaryotic translation initiation factor 3 subunit L from Neosartorya fischeri (strain ATCC 1020 / DSM 3700 / CBS 544.65 / FGSC A1164 / JCM 1740 / NRRL 181 / WB 181) (Aspergillus fischerianus).